The sequence spans 512 residues: Keratin, type I cytoskeletal 24 (512 aa).

The segment at 1 to 21 is disordered; sequence MFCSAQKGSCSSRVSSSGAVG. The head stretch occupies residues 1-140; it reads MFCSAQKGSC…GYDGGLLSGS (140 aa). Residues 8-21 are compositionally biased toward low complexity; it reads GSCSSRVSSSGAVG. Positions 141-176 are coil 1A; it reads EKQTMQDLNDRLANYLDKVRALEEANTDLECKIKDW. Positions 141 to 455 constitute an IF rod domain; sequence EKQTMQDLND…RLLNGDGGGC (315 aa). Residues 177 to 197 form a linker 1 region; sequence YGKHGSVKGGSGRDYSQYYSI. Positions 198 to 289 are coil 1B; sequence IEDLKKQILS…KNHEEEMKCM (92 aa). Residues 290 to 312 are linker 12; the sequence is QGSSGGDVTVEMNAAPGVDLTKL. The segment at 313 to 451 is coil 2; the sequence is LNDMRAQYEA…ETYRRLLNGD (139 aa). Residues 452–512 are tail; sequence GGGCDYRNLV…VSNISEVKIK (61 aa).

This sequence belongs to the intermediate filament family. Heterotetramer of two type I and two type II keratins.

In Mus musculus (Mouse), this protein is Keratin, type I cytoskeletal 24 (Krt24).